Reading from the N-terminus, the 283-residue chain is Cytosolic Fe-S cluster assembly factor CFD1 (283 aa).

Gly26–Ser33 contacts ATP. Positions 202 and 205 each coordinate [4Fe-4S] cluster.

This sequence belongs to the Mrp/NBP35 ATP-binding proteins family. NUBP2/CFD1 subfamily. As to quaternary structure, heterotetramer of 2 NBP35 and 2 CFD1 chains. It depends on [4Fe-4S] cluster as a cofactor.

The protein localises to the cytoplasm. Its function is as follows. Component of the cytosolic iron-sulfur (Fe/S) protein assembly (CIA) machinery. Required for maturation of extramitochondrial Fe-S proteins. The NBP35-CFD1 heterotetramer forms a Fe-S scaffold complex, mediating the de novo assembly of an Fe-S cluster and its transfer to target apoproteins. Required for biogenesis and export of both ribosomal subunits, which may reflect a role in assembly of the Fe/S clusters in RLI1, a protein which performs rRNA processing and ribosome export. The sequence is that of Cytosolic Fe-S cluster assembly factor CFD1 from Kluyveromyces lactis (strain ATCC 8585 / CBS 2359 / DSM 70799 / NBRC 1267 / NRRL Y-1140 / WM37) (Yeast).